A 225-amino-acid polypeptide reads, in one-letter code: Alpha-tubulin N-acetyltransferase 1 (225 aa).

An N-acetyltransferase domain is found at 1–190 (MEFPFDVDAL…NNFVIFEGFF (190 aa)). The residue at position 56 (K56) is an N6-acetyllysine; by autocatalysis. An acetyl-CoA-binding site is contributed by 124 to 137 (FYIHESLQRHGHGR). The residue at position 146 (K146) is an N6-acetyllysine; by autocatalysis. 160–169 (SQKLLKFLNK) contacts acetyl-CoA. The disordered stretch occupies residues 195-225 (PPARKLPPKRAEGDIKPYSSSDRESGLPQGW). A compositionally biased stretch (basic and acidic residues) spans 203 to 219 (KRAEGDIKPYSSSDRES). K210 is subject to N6-acetyllysine; by autocatalysis.

Belongs to the acetyltransferase ATAT1 family. Component of the BBSome complex. Interacts with AP2 alpha-adaptins, including AP2A2, but not with AP1 gamma-adaptin (AP1G1/AP1G2); this interaction is required for efficient alpha-tubulin acetylation, hence clathrin-coated pits are sites of microtubule acetylation. In terms of processing, autoacetylation strongly increases tubulin acetylation.

Its subcellular location is the cytoplasm. It localises to the membrane. The protein localises to the clathrin-coated pit. It is found in the cell junction. The protein resides in the focal adhesion. Its subcellular location is the cell projection. It localises to the axon. The protein localises to the cytoskeleton. It is found in the spindle. It catalyses the reaction L-lysyl-[alpha-tubulin] + acetyl-CoA = N(6)-acetyl-L-lysyl-[alpha-tubulin] + CoA + H(+). Functionally, specifically acetylates 'Lys-40' in alpha-tubulin on the lumenal side of microtubules. Promotes microtubule destabilization and accelerates microtubule dynamics; this activity may be independent of acetylation activity. Acetylates alpha-tubulin with a slow enzymatic rate, due to a catalytic site that is not optimized for acetyl transfer. Enters the microtubule through each end and diffuses quickly throughout the lumen of microtubules. Acetylates only long/old microtubules because of its slow acetylation rate since it does not have time to act on dynamically unstable microtubules before the enzyme is released. Required for normal sperm flagellar function. Promotes directional cell locomotion and chemotaxis, through AP2A2-dependent acetylation of alpha-tubulin at clathrin-coated pits that are concentrated at the leading edge of migrating cells. May facilitate primary cilium assembly. The protein is Alpha-tubulin N-acetyltransferase 1 of Bos taurus (Bovine).